The chain runs to 80 residues: DNA-binding protein HU-like (80 aa).

This sequence belongs to the bacterial histone-like protein family.

In terms of biological role, histone-like DNA-binding protein which is capable of wrapping DNA to stabilize it, and thus to prevent its denaturation under extreme environmental conditions. The sequence is that of DNA-binding protein HU-like from Rickettsia conorii (strain ATCC VR-613 / Malish 7).